The chain runs to 449 residues: Hyaluronidase (449 aa).

The N-terminal stretch at 1–23 (MYHLWIKCLAAWIFLKRFNGVHV) is a signal peptide. 2 cysteine pairs are disulfide-bonded: C47–C340 and C211–C227. N67, N103, and N111 each carry an N-linked (GlcNAc...) asparagine glycan. Catalysis depends on E135, which acts as the Proton donor. N153 carries N-linked (GlcNAc...) asparagine glycosylation. A glycan (N-linked (GlcNAc...) asparagine) is linked at N357. 3 disulfide bridges follow: C365–C376, C370–C427, and C429–C438. N401 carries N-linked (GlcNAc...) asparagine glycosylation. The EGF-like domain occupies 427-438 (CQCYQGWKGLYC).

The protein belongs to the glycosyl hydrolase 56 family. Monomer. In terms of tissue distribution, expressed by the venom gland.

It localises to the secreted. It catalyses the reaction Random hydrolysis of (1-&gt;4)-linkages between N-acetyl-beta-D-glucosamine and D-glucuronate residues in hyaluronate.. Its function is as follows. Snake venom endo-hyaluronidase that degrades hyaluronan to smaller oligosaccharide fragments. In venom, it is not toxic by itself, but increases the diffusion of other venom proteins by degrading the extracellular matrix. In addition, it displays antiedematogenic activity. This is Hyaluronidase from Crotalus adamanteus (Eastern diamondback rattlesnake).